The primary structure comprises 141 residues: Large ribosomal subunit protein uL16 (141 aa).

Residues 1-21 (MLMPKRTKFRKQMKGRNRGKS) are compositionally biased toward basic residues. The tract at residues 1 to 22 (MLMPKRTKFRKQMKGRNRGKSF) is disordered.

Belongs to the universal ribosomal protein uL16 family. Part of the 50S ribosomal subunit.

Its function is as follows. Binds 23S rRNA and is also seen to make contacts with the A and possibly P site tRNAs. This chain is Large ribosomal subunit protein uL16, found in Wolinella succinogenes (strain ATCC 29543 / DSM 1740 / CCUG 13145 / JCM 31913 / LMG 7466 / NCTC 11488 / FDC 602W) (Vibrio succinogenes).